A 79-amino-acid polypeptide reads, in one-letter code: Eumenine mastoparan-OD (79 aa).

The first 24 residues, 1–24 (MKQTIVIVLLAAVAMMACLQMVAA), serve as a signal peptide directing secretion. 5 AXPX repeats span residues 24 to 27 (AEPL), 30 to 33 (AAPA), 44 to 47 (ASPI), 52 to 55 (ANPE), and 58 to 61 (ASPE). The propeptide occupies 25–62 (EPLPEAAPAPSPLAEAEALASPIAEALANPEALASPEA). The residue at position 76 (Leu76) is a Leucine amide.

Expressed by the venom gland.

The protein localises to the secreted. It localises to the target cell membrane. Its function is as follows. Antimicrobial peptide with strong activity against the fungi C.albicans (MIC=6 uM) and B.cinerea (MIC=10 uM), and weaker activity against the Gram-negative bacterium E.coli (MIC=97 uM) and Gram-positive bacterium S.aureus (MIC=97 uM). Shows cytolytic activity against insect cell lines. Has potent hemolytic activity against ovine erythrocytes (80% at 50 uM), but has no hemolytic activity against human erythrocytes. In vivo, peptide injection in the vicinity of the head and thorax of lepidopteran larvae induces feeding disorder that lasts one or two days before recovering. This Orancistrocerus drewseni (Solitary wasp) protein is Eumenine mastoparan-OD.